A 417-amino-acid polypeptide reads, in one-letter code: Phosphoglycerate kinase 2 (417 aa).

Serine 2 carries the post-translational modification N-acetylserine. 2 positions are modified to phosphoserine: serine 2 and serine 4. Residue lysine 11 is modified to N6-acetyllysine. Residues valine 23, aspartate 24, phenylalanine 25, asparagine 26, glutamine 38, and arginine 39 each coordinate (2R)-3-phosphoglycerate. Lysine 48 bears the N6-acetyllysine mark. (2R)-3-phosphoglycerate contacts are provided by serine 62, histidine 63, glycine 65, and arginine 66. N6-acetyllysine occurs at positions 75, 86, and 97. Leucine 122 and arginine 123 together coordinate (2R)-3-phosphoglycerate. 2 positions are modified to N6-acetyllysine: lysine 131 and lysine 146. (2R)-3-phosphoglycerate is bound by residues histidine 170 and arginine 171. Residue tyrosine 196 is modified to Phosphotyrosine. N6-acetyllysine is present on lysine 199. Glycine 214 contributes to the ADP binding site. A CDP-binding site is contributed by glycine 214. Residues alanine 215 and lysine 216 each contribute to the AMP site. Alanine 215 contacts ATP. Alanine 215 lines the Mg(2+) pocket. Mg(2+)-binding residues include alanine 218 and aspartate 219. Aspartate 219 serves as a coordination point for CDP. Lysine 220 is a binding site for AMP. Residue lysine 220 coordinates ATP. Glycine 238 is an ADP binding site. Glycine 238 contacts CDP. An AMP-binding site is contributed by glycine 239. ATP is bound at residue glycine 239. N6-acetyllysine occurs at positions 267 and 291. Glycine 313 is a binding site for AMP. An ATP-binding site is contributed by glycine 313. Residues glycine 338 and phenylalanine 343 each coordinate CDP. Phenylalanine 343 provides a ligand contact to ADP. Residue glutamate 344 participates in AMP binding. Residues glutamate 344, aspartate 375, and threonine 376 each contribute to the ATP site. Aspartate 375 provides a ligand contact to Mg(2+).

It belongs to the phosphoglycerate kinase family. In terms of assembly, monomer. The cofactor is Mg(2+).

It is found in the cytoplasm. The catalysed reaction is (2R)-3-phosphoglycerate + ATP = (2R)-3-phospho-glyceroyl phosphate + ADP. It functions in the pathway carbohydrate degradation; glycolysis; pyruvate from D-glyceraldehyde 3-phosphate: step 2/5. Its function is as follows. Essential for sperm motility and male fertility but is not required for the completion of spermatogenesis. This is Phosphoglycerate kinase 2 (PGK2) from Macaca fascicularis (Crab-eating macaque).